The sequence spans 137 residues: uncharacterized protein (137 aa).

It to E.coli YfdK.

This is an uncharacterized protein from Escherichia coli (strain K12).